The primary structure comprises 316 residues: D-alanine--D-alanine ligase (316 aa).

The 203-residue stretch at 108-310 (ERYEELSVVK…FDELVDLIIK (203 aa)) folds into the ATP-grasp domain. Residue 138-193 (EEKIGLPCVVKPRKEGSSIGTHICFSKEELLDALKNEFKNYDEMIVQEYIKGKEIT) participates in ATP binding. Residues Asp265, Glu277, and Asn279 each contribute to the Mg(2+) site.

The protein belongs to the D-alanine--D-alanine ligase family. Mg(2+) is required as a cofactor. It depends on Mn(2+) as a cofactor.

Its subcellular location is the cytoplasm. The enzyme catalyses 2 D-alanine + ATP = D-alanyl-D-alanine + ADP + phosphate + H(+). It functions in the pathway cell wall biogenesis; peptidoglycan biosynthesis. Functionally, cell wall formation. This Fervidobacterium nodosum (strain ATCC 35602 / DSM 5306 / Rt17-B1) protein is D-alanine--D-alanine ligase.